The primary structure comprises 340 residues: Chitinase 7 (340 aa).

The signal sequence occupies residues 1-32 (MIAARAANLQVAMKALALAVLALAYAAATARA). The Chitin-binding type-1 domain occupies 33–73 (EQCGRQAGGARCPNRLCCSRWGWCGLTDDYCKGGCQSQCRV). 7 cysteine pairs are disulfide-bonded: Cys35–Cys50, Cys44–Cys56, Cys49–Cys63, Cys67–Cys71, Cys118–Cys173, Cys185–Cys193, and Cys293–Cys323.

Belongs to the glycosyl hydrolase 19 family. Chitinase class I subfamily. As to expression, expressed in pistils, stamens and lodicules.

The catalysed reaction is Random endo-hydrolysis of N-acetyl-beta-D-glucosaminide (1-&gt;4)-beta-linkages in chitin and chitodextrins.. Hydrolyzes chitin and may play a role in defense against fungal pathogens containing chitin. The chain is Chitinase 7 (Cht7) from Oryza sativa subsp. japonica (Rice).